The sequence spans 262 residues: Tethering factor for nuclear proteasome cut8 (262 aa).

Belongs to the cut8/STS1 family. Binds the proteasome. In terms of processing, the N-terminal part (residues 1 to 72) is polyubiquitinated by rhp6, which is required for the interaction with the proteasome.

The protein resides in the nucleus envelope. Functionally, together with nucleoporin alm1, tethers the proteasome to the nuclear envelope. Involved in ubiquitin-mediated protein degradation and facilitates the degradation of nuclear proteins like mitotic cyclin and cut2. Required for normal progression of anaphase. The protein is Tethering factor for nuclear proteasome cut8 of Schizosaccharomyces pombe (strain 972 / ATCC 24843) (Fission yeast).